A 603-amino-acid chain; its full sequence is Serine/threonine-protein kinase PLK1 (603 aa).

The interval methionine 1–proline 35 is disordered. At serine 2 the chain carries N-acetylserine. Threonine 6 is modified (phosphothreonine). Low complexity predominate over residues alanine 13 to proline 35. Lysine 19 participates in a covalent cross-link: Glycyl lysine isopeptide (Lys-Gly) (interchain with G-Cter in ubiquitin). The region spanning tyrosine 53–phenylalanine 305 is the Protein kinase domain. Residues leucine 59–cysteine 67 and lysine 82 contribute to the ATP site. A Phosphoserine modification is found at serine 103. Glutamate 131 lines the ATP pocket. Serine 137 bears the Phosphoserine mark. Aspartate 176 (proton acceptor) is an active-site residue. ATP contacts are provided by residues lysine 178 to asparagine 181 and aspartate 194. The tract at residues aspartate 194–glutamate 221 is activation loop. Threonine 210 carries the phosphothreonine; by AURKA modification. Threonine 214 carries the phosphothreonine modification. Position 269 is a phosphoserine; by autocatalysis (serine 269). Serine 335 bears the Phosphoserine mark. Positions arginine 337–leucine 340 match the D-box that targets the protein for proteasomal degradation in anaphase motif. Lysine 338 is covalently cross-linked (Glycyl lysine isopeptide (Lys-Gly) (interchain with G-Cter in SUMO2)). Residues lysine 338 to arginine 364 form a disordered region. Residues leucine 351 to arginine 364 show a composition bias toward basic and acidic residues. 2 positions are modified to phosphoserine: serine 375 and serine 450. One can recognise a POLO box 1 domain in the interval tryptophan 410–glutamate 488. Residue lysine 492 forms a Glycyl lysine isopeptide (Lys-Gly) (interchain with G-Cter in ubiquitin) linkage. The interval alanine 493–arginine 507 is linker. Threonine 498 bears the Phosphothreonine mark. The region spanning tyrosine 510 to serine 592 is the POLO box 2 domain. The interval histidine 538–lysine 540 is important for interaction with phosphorylated proteins.

The protein belongs to the protein kinase superfamily. Ser/Thr protein kinase family. CDC5/Polo subfamily. Interacts with CEP170. Interacts with EVI5. Interacts with FAM29A. Interacts with SLX4/BTBD12. Interacts with TTDN1. Interacts (via POLO-box domain) with the phosphorylated form of BUB1, CDC25C and CENPU. Interacts with KIF2A. Interacts with CYLD. Part of an astrin (SPAG5)-kinastrin (SKAP) complex containing KNSTRN, SPAG5, PLK1, DYNLL1 and SGO2. Interacts with BIRC6/bruce. Interacts with CDK1-phosphorylated FRY; this interaction occurs in mitotic cells, but not in interphase cells. FRY interaction facilitates AURKA-mediated PLK1 phosphorylation. Interacts with CDK1-phosphorylated DCTN6 during mitotic prometaphase; the interaction facilitates recruitment to kinetochores. Interacts with CEP68; the interaction phosphorylates CEP68. Interacts (via POLO-box domain) with DCTN1. Interacts with CEP20 in later G1, S, G2 and M phases of the cell cycle; this interaction recruits PLK1 to centrosomes, a step required for S phase progression. Interacts with KLHL22. Interacts (via POLO box domains) with NEDD9/HEF1 (via C-terminus). Interacts with FIRRM (via N-terminus region); required for maintaining, but not activating, PLK1 kinase activity. Interacts with FZR1. Interacts with SKA3; the interaction promotes the stability of PLK1; the interaction promotes the stability of PLK1. Interacts with the MTMR3:MTMR4 heterooligomer; brings CEP55 and PLK1 together during early mitosis, regulating the phosphorylation of CEP55 by PLK1 and its recruitment to the midbody where it can mediate cell abscission. Post-translationally, catalytic activity is enhanced by phosphorylation of Thr-210. Phosphorylation at Thr-210 is first detected on centrosomes in the G2 phase of the cell cycle, peaks in prometaphase and gradually disappears from centrosomes during anaphase. Dephosphorylation at Thr-210 at centrosomes is probably mediated by protein phosphatase 1C (PP1C), via interaction with PPP1R12A/MYPT1. Autophosphorylation and phosphorylation of Ser-137 may not be significant for the activation of PLK1 during mitosis, but may enhance catalytic activity during recovery after DNA damage checkpoint. Phosphorylated in vitro by STK10. Ubiquitinated by the anaphase promoting complex/cyclosome (APC/C) in anaphase and following DNA damage, leading to its degradation by the proteasome. Ubiquitination is mediated via its interaction with FZR1/CDH1. Ubiquitination and subsequent degradation prevents entry into mitosis and is essential to maintain an efficient G2 DNA damage checkpoint. Monoubiquitination at Lys-492 by the BCR(KLHL22) ubiquitin ligase complex does not lead to degradation: it promotes PLK1 dissociation from phosphoreceptor proteins and subsequent removal from kinetochores, allowing silencing of the spindle assembly checkpoint (SAC) and chromosome segregation. As to expression, placenta and colon.

It is found in the nucleus. Its subcellular location is the chromosome. It localises to the centromere. The protein resides in the kinetochore. The protein localises to the cytoplasm. It is found in the cytoskeleton. Its subcellular location is the microtubule organizing center. It localises to the centrosome. The protein resides in the spindle. The protein localises to the midbody. The catalysed reaction is L-seryl-[protein] + ATP = O-phospho-L-seryl-[protein] + ADP + H(+). It catalyses the reaction L-threonyl-[protein] + ATP = O-phospho-L-threonyl-[protein] + ADP + H(+). Activated by phosphorylation of Thr-210 by AURKA; phosphorylation by AURKA is enhanced by BORA. Once activated, activity is stimulated by binding target proteins. Binding of target proteins has no effect on the non-activated kinase. Several inhibitors targeting PLKs are currently in development and are under investigation in a growing number of clinical trials, such as BI 2536, an ATP-competitive PLK1 inhibitor or BI 6727, a dihydropteridinone that specifically inhibits the catalytic activity of PLK1. Functionally, serine/threonine-protein kinase that performs several important functions throughout M phase of the cell cycle, including the regulation of centrosome maturation and spindle assembly, the removal of cohesins from chromosome arms, the inactivation of anaphase-promoting complex/cyclosome (APC/C) inhibitors, and the regulation of mitotic exit and cytokinesis. Polo-like kinase proteins act by binding and phosphorylating proteins that are already phosphorylated on a specific motif recognized by the POLO box domains. Phosphorylates BORA, BUB1B/BUBR1, CCNB1, CDC25C, CEP55, ECT2, ERCC6L, FBXO5/EMI1, FOXM1, KIF20A/MKLP2, CENPU, NEDD1, NINL, NPM1, NUDC, PKMYT1/MYT1, KIZ, MRE11, PPP1R12A/MYPT1, POLQ, PRC1, RACGAP1/CYK4, RAD51, RHNO1, SGO1, STAG2/SA2, TEX14, TOPORS, p73/TP73, TPT1, WEE1 and HNRNPU. Plays a key role in centrosome functions and the assembly of bipolar spindles by phosphorylating KIZ, NEDD1 and NINL. NEDD1 phosphorylation promotes subsequent targeting of the gamma-tubulin ring complex (gTuRC) to the centrosome, an important step for spindle formation. Phosphorylation of NINL component of the centrosome leads to NINL dissociation from other centrosomal proteins. Involved in mitosis exit and cytokinesis by phosphorylating CEP55, ECT2, KIF20A/MKLP2, CENPU, PRC1 and RACGAP1. Recruited at the central spindle by phosphorylating and docking PRC1 and KIF20A/MKLP2; creates its own docking sites on PRC1 and KIF20A/MKLP2 by mediating phosphorylation of sites subsequently recognized by the POLO box domains. Phosphorylates RACGAP1, thereby creating a docking site for the Rho GTP exchange factor ECT2 that is essential for the cleavage furrow formation. Promotes the central spindle recruitment of ECT2. Plays a central role in G2/M transition of mitotic cell cycle by phosphorylating CCNB1, CDC25C, FOXM1, CENPU, PKMYT1/MYT1, PPP1R12A/MYPT1 and WEE1. Part of a regulatory circuit that promotes the activation of CDK1 by phosphorylating the positive regulator CDC25C and inhibiting the negative regulators WEE1 and PKMYT1/MYT1. Also acts by mediating phosphorylation of cyclin-B1 (CCNB1) on centrosomes in prophase. Phosphorylates FOXM1, a key mitotic transcription regulator, leading to enhance FOXM1 transcriptional activity. Involved in kinetochore functions and sister chromatid cohesion by phosphorylating BUB1B/BUBR1, FBXO5/EMI1 and STAG2/SA2. PLK1 is high on non-attached kinetochores suggesting a role of PLK1 in kinetochore attachment or in spindle assembly checkpoint (SAC) regulation. Required for kinetochore localization of BUB1B. Regulates the dissociation of cohesin from chromosomes by phosphorylating cohesin subunits such as STAG2/SA2. Phosphorylates SGO1: required for spindle pole localization of isoform 3 of SGO1 and plays a role in regulating its centriole cohesion function. Mediates phosphorylation of FBXO5/EMI1, a negative regulator of the APC/C complex during prophase, leading to FBXO5/EMI1 ubiquitination and degradation by the proteasome. Acts as a negative regulator of p53 family members: phosphorylates TOPORS, leading to inhibit the sumoylation of p53/TP53 and simultaneously enhance the ubiquitination and subsequent degradation of p53/TP53. Phosphorylates the transactivation domain of the transcription factor p73/TP73, leading to inhibit p73/TP73-mediated transcriptional activation and pro-apoptotic functions. Phosphorylates BORA, and thereby promotes the degradation of BORA. Contributes to the regulation of AURKA function. Also required for recovery after DNA damage checkpoint and entry into mitosis. Phosphorylates MISP, leading to stabilization of cortical and astral microtubule attachments required for proper spindle positioning. Together with MEIKIN, acts as a regulator of kinetochore function during meiosis I: required both for mono-orientation of kinetochores on sister chromosomes and protection of centromeric cohesin from separase-mediated cleavage. Phosphorylates CEP68 and is required for its degradation. Regulates nuclear envelope breakdown during prophase by phosphorylating DCTN1 resulting in its localization in the nuclear envelope. Phosphorylates the heat shock transcription factor HSF1, promoting HSF1 nuclear translocation upon heat shock. Phosphorylates HSF1 also in the early mitotic period; this phosphorylation regulates HSF1 localization to the spindle pole, the recruitment of the SCF(BTRC) ubiquitin ligase complex induicing HSF1 degradation, and hence mitotic progression. Regulates mitotic progression by phosphorylating RIOK2. Through the phosphorylation of DZIP1 regulates the localization during mitosis of the BBSome, a ciliary protein complex involved in cilium biogenesis. Regulates DNA repair during mitosis by mediating phosphorylation of POLQ and RHNO1, thereby promoting POLQ recruitment to DNA damage sites. Phosphorylates ATXN10 which may play a role in the regulation of cytokinesis and may stimulate the proteasome-mediated degradation of ATXN10. The chain is Serine/threonine-protein kinase PLK1 (PLK1) from Homo sapiens (Human).